We begin with the raw amino-acid sequence, 616 residues long: Auxin efflux carrier component 4 (616 aa).

Over 1-7 the chain is Extracellular; the sequence is MITWHDL. A helical membrane pass occupies residues 8–28; that stretch reads YTVLTAVVPLYVAMILAYGSV. Topologically, residues 29–38 are cytoplasmic; that stretch reads QWWKIFSPDQ. A helical membrane pass occupies residues 39 to 59; it reads CSGINRFVAIFAVPLLSFHFI. Val51 is a binding site for (indol-3-yl)acetate. Residues 60–70 lie on the Extracellular side of the membrane; the sequence is STNDPYAMNFR. Residues 71 to 91 traverse the membrane as a helical segment; sequence FVAADTLQKIIMLVLLALWAN. The Cytoplasmic segment spans residues 92–101; it reads LTKNGSLEWM. A helical transmembrane segment spans residues 102-122; it reads ITIFSLSTLPNTLVMGIPLLI. Residues Asn112 and Leu114 each contribute to the (indol-3-yl)acetate site. The Extracellular portion of the chain corresponds to 123-131; sequence AMYGTYAGS. The chain crosses the membrane as a helical span at residues 132-152; it reads LMVQVVVLQCIIWYTLLLFLF. Tyr145 contributes to the (indol-3-yl)acetate binding site. The Cytoplasmic portion of the chain corresponds to 153 to 476; the sequence is EYRGAKLLIM…LIRNPNTYSS (324 aa). Phosphoserine occurs at positions 223, 240, and 280. The interval 302-343 is disordered; it reads AAGSYPAPNPEFSTGTGVSTKPNKIPKENQQQLQEKDSKASH. Residues 312-334 show a composition bias toward polar residues; sequence EFSTGTGVSTKPNKIPKENQQQL. A phosphoserine mark is found at Ser358 and Ser395. Residues 390-411 form a disordered region; the sequence is DQPRKSNARGGGDDIGGLDSGE. The span at 398-409 shows a compositional bias: gly residues; it reads RGGGDDIGGLDS. Residues 477–497 form a helical membrane-spanning segment; it reads LIGLIWALVAYRWHVAMPKIL. The Extracellular segment spans residues 498-500; the sequence is QQS. The chain crosses the membrane as a helical span at residues 501–521; the sequence is ISILSDAGLGMAMFSLGLFMA. At 522 to 535 the chain is on the cytoplasmic side; it reads LQPKIIACGNSVAT. Residues 536–556 form a helical membrane-spanning segment; sequence FAMAVRFITGPAIMAVAGIAI. The Extracellular segment spans residues 557 to 561; sequence GLHGD. Residues 562 to 582 form a helical membrane-spanning segment; that stretch reads LLRIAIVQAALPQGIVPFVFA. The (indol-3-yl)acetate site is built by Ile576 and Val577. At 583–595 the chain is on the cytoplasmic side; the sequence is KEYNVHPTILSTG. The chain crosses the membrane as a helical span at residues 596 to 616; the sequence is VIFGMLIALPITLVYYILLGL.

It belongs to the auxin efflux carrier (TC 2.A.69.1) family. In terms of assembly, homodimer. In terms of tissue distribution, expressed in the quiescent center precursors and surrounding cells. Present in columella cells of primary roots. Detected in pollen.

The protein localises to the cell membrane. Functionally, acts as a component of the auxin efflux carrier. Plays a role in generating a sink for auxin into columella cells. Maintains the endogenous auxin gradient, which is essential for correct root patterning. Involved in EXO70A3-regulated gravitropic responses in columella cells and in root system architecture (RSA). Together with PIN3 and PIN7, involved in the connective auxin transport (CAT) that ensures communication across the shoot system, and modulates strigolactone-mediated shoot branching control. The abcb19 pin3 pin4 pin7 quadruple mutant exhibits an additive phenotype on strigolactone-mediated bud outgrowth responses and shoot branching control. The sequence is that of Auxin efflux carrier component 4 from Arabidopsis thaliana (Mouse-ear cress).